Here is a 237-residue protein sequence, read N- to C-terminus: Corrinoid adenosyltransferase MMAB (237 aa).

A mitochondrion-targeting transit peptide spans 1 to 26; sequence MAVWLFGGRLGLRGRLSACRLLCPRF. Residues 30–49 are disordered; sequence GPQGGEDGDRLQPSSTAAKI. Residues 54–57, 62–63, and lysine 72 contribute to the ATP site; these read TKTG and SS. Serine 128 bears the Phosphoserine mark. Residue 184–188 coordinates ATP; sequence RRAER. Lysine 205 carries the N6-succinyllysine modification. Asparagine 208 lines the ATP pocket. At lysine 224 the chain carries N6-acetyllysine; alternate. An N6-succinyllysine; alternate modification is found at lysine 224.

This sequence belongs to the Cob(I)alamin adenosyltransferase family. In terms of assembly, homotrimer.

The protein resides in the mitochondrion. It carries out the reaction cob(I)alamin-[corrinoid adenosyltransferase] + ATP = apo-[corrinoid adenosyltransferase] + adenosylcob(III)alamin + triphosphate. Functionally, converts cob(I)alamin to adenosylcobalamin (adenosylcob(III)alamin), a coenzyme for methylmalonyl-CoA mutase, therefore participates in the final step of the vitamin B12 conversion. Generates adenosylcobalamin (AdoCbl) and directly delivers the cofactor to MUT in a transfer that is stimulated by ATP-binding to MMAB and gated by MMAA. The sequence is that of Corrinoid adenosyltransferase MMAB from Mus musculus (Mouse).